A 382-amino-acid polypeptide reads, in one-letter code: Methenyltetrahydrofolate synthase domain-containing protein (382 aa).

The RRM domain occupies 306–382 (TTVYLSDIPP…QAKCVSSQKM (77 aa)).

The chain is Methenyltetrahydrofolate synthase domain-containing protein (mthfsd) from Danio rerio (Zebrafish).